We begin with the raw amino-acid sequence, 398 residues long: UDP-N-acetylglucosamine--N-acetylmuramyl-(pentapeptide) pyrophosphoryl-undecaprenol N-acetylglucosamine transferase (398 aa).

UDP-N-acetyl-alpha-D-glucosamine-binding positions include 11–13 (TGG), Asn124, Arg164, Ser192, and Gln318.

The protein belongs to the glycosyltransferase 28 family. MurG subfamily.

Its subcellular location is the cell membrane. It catalyses the reaction di-trans,octa-cis-undecaprenyl diphospho-N-acetyl-alpha-D-muramoyl-L-alanyl-D-glutamyl-meso-2,6-diaminopimeloyl-D-alanyl-D-alanine + UDP-N-acetyl-alpha-D-glucosamine = di-trans,octa-cis-undecaprenyl diphospho-[N-acetyl-alpha-D-glucosaminyl-(1-&gt;4)]-N-acetyl-alpha-D-muramoyl-L-alanyl-D-glutamyl-meso-2,6-diaminopimeloyl-D-alanyl-D-alanine + UDP + H(+). The protein operates within cell wall biogenesis; peptidoglycan biosynthesis. Its function is as follows. Cell wall formation. Catalyzes the transfer of a GlcNAc subunit on undecaprenyl-pyrophosphoryl-MurNAc-pentapeptide (lipid intermediate I) to form undecaprenyl-pyrophosphoryl-MurNAc-(pentapeptide)GlcNAc (lipid intermediate II). The polypeptide is UDP-N-acetylglucosamine--N-acetylmuramyl-(pentapeptide) pyrophosphoryl-undecaprenol N-acetylglucosamine transferase (Deinococcus radiodurans (strain ATCC 13939 / DSM 20539 / JCM 16871 / CCUG 27074 / LMG 4051 / NBRC 15346 / NCIMB 9279 / VKM B-1422 / R1)).